Reading from the N-terminus, the 471-residue chain is Intraflagellar transport protein 46 homolog (471 aa).

Disordered regions lie at residues 1–202 (MSSE…SNMR) and 226–246 (SRLEDDSSNDDDDDDDDEDDD). Acidic residues-rich tracts occupy residues 89 to 99 (SEPQEVIDVND) and 231 to 246 (DSSNDDDDDDDDEDDD).

It belongs to the IFT46 family. As to quaternary structure, component of the IFT complex B composed of at least che-2, che-13, dyf-1, dyf-3, dyf-6, dyf-11, dyf-13, ift-20, ift-74, ift-81, ifta-2, osm-1, osm-5 and osm-6. Expressed in the hypodermis and sensory neurons including inner labial, PDE, amphid and phasmid neurons.

It is found in the cell projection. The protein localises to the cilium. Its subcellular location is the cytoplasm. It localises to the cytoskeleton. The protein resides in the cilium basal body. It is found in the dendrite. The protein localises to the perikaryon. Its function is as follows. Component of the intraflagellar transport (IFT) complex B required for transport of proteins in the motile cilium. May be required for ciliary entrance and transport of specific ciliary cargo proteins such as che-3 which are related to motility. Required for normal morphology and function of ciliated amphid sensory neurons. The polypeptide is Intraflagellar transport protein 46 homolog (Caenorhabditis elegans).